A 1249-amino-acid polypeptide reads, in one-letter code: AMB antimetabolite synthetase AmbB (1249 aa).

Residues 245–633 (FEAQARRTPQ…LGRLDDQVKF (389 aa)) form an adenylation region. The disordered stretch occupies residues 716 to 735 (IDRKALPRPQATGAEPQALP). The Carrier domain occupies 734-809 (LPSDPLEQAL…ALLELLRQAA (76 aa)). S768 carries the O-(pantetheine 4'-phosphoryl)serine modification. The tract at residues 823–1150 (GLSLAERRLW…CVTQALRQRG (328 aa)) is condensation.

This sequence belongs to the NRP synthetase family. Requires pantetheine 4'-phosphate as cofactor.

It catalyses the reaction holo-[peptidyl-carrier protein] + L-alanine + ATP = L-alanyl-[peptidyl-carrier protein] + AMP + diphosphate. Functionally, involved in the biosynthesis of the antimetabolite L-2-amino-4-methoxy-trans-3-butenoic acid (AMB), a non-proteinogenic amino acid which is toxic for prokaryotes and eukaryotes. Adenylates L-alanine and loads it onto its peptidyl carrier domain via a thioester linkage to the phosphopanthetheine moiety. In addition, loads activated L-Ala in trans onto the second carrier domain of AmbE. Can also activate L-Ser, Gly and D-Ala, albeit to a lower extent. The condensation domain of AmbB probably condenses the activated L-Ala and the L-Glu loaded on AmbE to form a L-Glu-L-Ala dipeptide at the first carrier domain of AmbE. The chain is AMB antimetabolite synthetase AmbB from Pseudomonas aeruginosa (strain ATCC 15692 / DSM 22644 / CIP 104116 / JCM 14847 / LMG 12228 / 1C / PRS 101 / PAO1).